The chain runs to 366 residues: Histidinol-phosphate aminotransferase 2 (366 aa).

Lys-226 carries the post-translational modification N6-(pyridoxal phosphate)lysine.

The protein belongs to the class-II pyridoxal-phosphate-dependent aminotransferase family. Histidinol-phosphate aminotransferase subfamily. Homodimer. Requires pyridoxal 5'-phosphate as cofactor.

The enzyme catalyses L-histidinol phosphate + 2-oxoglutarate = 3-(imidazol-4-yl)-2-oxopropyl phosphate + L-glutamate. It participates in amino-acid biosynthesis; L-histidine biosynthesis; L-histidine from 5-phospho-alpha-D-ribose 1-diphosphate: step 7/9. The sequence is that of Histidinol-phosphate aminotransferase 2 (hisC2) from Haemophilus influenzae (strain ATCC 51907 / DSM 11121 / KW20 / Rd).